The sequence spans 225 residues: NAD(P)H-quinone oxidoreductase subunit K, chloroplastic (225 aa).

Residues Cys43, Cys44, Cys108, and Cys139 each coordinate [4Fe-4S] cluster.

It belongs to the complex I 20 kDa subunit family. As to quaternary structure, NDH is composed of at least 16 different subunits, 5 of which are encoded in the nucleus. [4Fe-4S] cluster serves as cofactor.

Its subcellular location is the plastid. It localises to the chloroplast thylakoid membrane. The catalysed reaction is a plastoquinone + NADH + (n+1) H(+)(in) = a plastoquinol + NAD(+) + n H(+)(out). It carries out the reaction a plastoquinone + NADPH + (n+1) H(+)(in) = a plastoquinol + NADP(+) + n H(+)(out). Its function is as follows. NDH shuttles electrons from NAD(P)H:plastoquinone, via FMN and iron-sulfur (Fe-S) centers, to quinones in the photosynthetic chain and possibly in a chloroplast respiratory chain. The immediate electron acceptor for the enzyme in this species is believed to be plastoquinone. Couples the redox reaction to proton translocation, and thus conserves the redox energy in a proton gradient. This Draba nemorosa (Woodland whitlowgrass) protein is NAD(P)H-quinone oxidoreductase subunit K, chloroplastic.